Here is a 399-residue protein sequence, read N- to C-terminus: Stearoyl-[acyl-carrier-protein] 9-desaturase, seed specific, chloroplastic (399 aa).

A chloroplast-targeting transit peptide spans 1–34 (MALKFNPLVSQPYKLASSARPPVSTFRSPKFLCL). Fe cation-binding residues include Glu-141, Glu-179, His-182, Glu-232, Glu-265, and His-268.

The protein belongs to the fatty acid desaturase type 2 family. Homodimer. Requires Fe(2+) as cofactor. Developing seeds.

The protein resides in the plastid. It is found in the chloroplast. The catalysed reaction is octadecanoyl-[ACP] + 2 reduced [2Fe-2S]-[ferredoxin] + O2 + 2 H(+) = (9Z)-octadecenoyl-[ACP] + 2 oxidized [2Fe-2S]-[ferredoxin] + 2 H2O. It participates in lipid metabolism; fatty acid metabolism. Its function is as follows. Converts stearoyl-ACP to oleoyl-ACP by introduction of a cis double bond between carbons Delta(9) and Delta(10) of the acyl chain. The protein is Stearoyl-[acyl-carrier-protein] 9-desaturase, seed specific, chloroplastic of Brassica napus (Rape).